The following is a 379-amino-acid chain: Cytochrome b (379 aa).

4 helical membrane passes run Phe33–Met53, Trp77–Val98, Trp113–Leu133, and Phe178–Leu198. The heme b site is built by His83 and His97. Heme b is bound by residues His182 and His196. His201 is a binding site for a ubiquinone. 4 helical membrane passes run Thr226–Phe246, Leu288–Asn308, Val320–Gly340, and Phe347–Pro367.

It belongs to the cytochrome b family. In terms of assembly, the cytochrome bc1 complex contains 11 subunits: 3 respiratory subunits (MT-CYB, CYC1 and UQCRFS1), 2 core proteins (UQCRC1 and UQCRC2) and 6 low-molecular weight proteins (UQCRH/QCR6, UQCRB/QCR7, UQCRQ/QCR8, UQCR10/QCR9, UQCR11/QCR10 and a cleavage product of UQCRFS1). This cytochrome bc1 complex then forms a dimer. It depends on heme b as a cofactor.

It is found in the mitochondrion inner membrane. Functionally, component of the ubiquinol-cytochrome c reductase complex (complex III or cytochrome b-c1 complex) that is part of the mitochondrial respiratory chain. The b-c1 complex mediates electron transfer from ubiquinol to cytochrome c. Contributes to the generation of a proton gradient across the mitochondrial membrane that is then used for ATP synthesis. The sequence is that of Cytochrome b (MT-CYB) from Akodon montensis (Montane grass mouse).